The following is a 246-amino-acid chain: U11/U12 small nuclear ribonucleoprotein 35 kDa protein (246 aa).

One can recognise an RRM domain in the interval 51-129 (LTLFVARLNL…HEIFVDYELE (79 aa)). K172 is covalently cross-linked (Glycyl lysine isopeptide (Lys-Gly) (interchain with G-Cter in SUMO2)). The segment at 187–217 (SRSRERHWDSRTRDRDHDRGREKRWQEREPT) is disordered. Residues 192–217 (RHWDSRTRDRDHDRGREKRWQEREPT) are compositionally biased toward basic and acidic residues.

Component of the U11/U12 snRNPs that are part of the U12-type spliceosome. In terms of tissue distribution, expressed in heart, liver, skeletal muscle and pancreas.

It localises to the nucleus. The sequence is that of U11/U12 small nuclear ribonucleoprotein 35 kDa protein (SNRNP35) from Homo sapiens (Human).